The following is a 535-amino-acid chain: Probable acyl-activating enzyme 22 (535 aa).

It belongs to the ATP-dependent AMP-binding enzyme family.

Functionally, may act as an acid--thiol ligase that activates carboxylic acids by forming acyl-CoAs. This chain is Probable acyl-activating enzyme 22 (AEE22), found in Arabidopsis thaliana (Mouse-ear cress).